A 339-amino-acid polypeptide reads, in one-letter code: MDLINSSTHVINVSTSLTNSTGVPTPAPKTIIAASLFMAFIIGVISNGLYLWMLQFKMQRTVNTLLFFHLILSYFISTLILPFMATSFLQDNHWVFGSVLCKAFNSTLSVSMFASVFFLSAISVARYYLILHPVWSQQHRTPHWASRIALQIWISATILSIPYLVFRTTHDDHKGRIKCQNNYIVSTDWESKEHQTLGQWIHAACFVGRFLLGFLLPFLVIIFCYKRVATKMKEKGLFKSSKPFKVMVTAVISFFVCWMPYHVHSGLVLTKSQPLPLHLTLGLAVVTISFNTVVSPVLYLFTGENFKVFKKSILALFNSTFSDISSTERTQTLNSETEI.

Residues 1–30 (MDLINSSTHVINVSTSLTNSTGVPTPAPKT) lie on the Extracellular side of the membrane. 3 N-linked (GlcNAc...) asparagine glycosylation sites follow: Asn-5, Asn-12, and Asn-19. A helical membrane pass occupies residues 31–53 (IIAASLFMAFIIGVISNGLYLWM). Residues 54–64 (LQFKMQRTVNT) lie on the Cytoplasmic side of the membrane. Residues 65 to 86 (LLFFHLILSYFISTLILPFMAT) form a helical membrane-spanning segment. At 87 to 103 (SFLQDNHWVFGSVLCKA) the chain is on the extracellular side. A disulfide bond links Cys-101 and Cys-179. The helical transmembrane segment at 104–124 (FNSTLSVSMFASVFFLSAISV) threads the bilayer. The Cytoplasmic portion of the chain corresponds to 125–143 (ARYYLILHPVWSQQHRTPH). A helical membrane pass occupies residues 144–165 (WASRIALQIWISATILSIPYLV). The Extracellular segment spans residues 166–209 (FRTTHDDHKGRIKCQNNYIVSTDWESKEHQTLGQWIHAACFVGR). A helical membrane pass occupies residues 210 to 230 (FLLGFLLPFLVIIFCYKRVAT). Over 231 to 246 (KMKEKGLFKSSKPFKV) the chain is Cytoplasmic. Residues 247-268 (MVTAVISFFVCWMPYHVHSGLV) traverse the membrane as a helical segment. The Extracellular portion of the chain corresponds to 269-283 (LTKSQPLPLHLTLGL). A helical transmembrane segment spans residues 284 to 303 (AVVTISFNTVVSPVLYLFTG). Residues 304-339 (ENFKVFKKSILALFNSTFSDISSTERTQTLNSETEI) are Cytoplasmic-facing.

The protein belongs to the G-protein coupled receptor 1 family. As to expression, expressed predominantly in lung, spleen and testis.

Its subcellular location is the cell membrane. Functionally, orphan receptor; could be a chemoattractant receptor. The polypeptide is Probable G-protein coupled receptor 33 (Gpr33) (Mus musculus (Mouse)).